Consider the following 485-residue polypeptide: Acyl transferase 1 (485 aa).

The active-site Proton acceptor is His172.

Belongs to the plant acyltransferase family. In terms of tissue distribution, highly expressed in young panicles. Expressed in leaf sheaths and panicles.

Involved in defense against pathogens. May contribute to disease resistance by potentiating disease resistance signaling, or producing phytoalexin-like secondary products. This is Acyl transferase 1 from Oryza sativa subsp. japonica (Rice).